We begin with the raw amino-acid sequence, 271 residues long: Regulatory protein RecX (271 aa).

This sequence belongs to the RecX family.

It is found in the cytoplasm. Functionally, modulates RecA activity. This is Regulatory protein RecX from Lactobacillus johnsonii (strain CNCM I-12250 / La1 / NCC 533).